Consider the following 178-residue polypeptide: ATP synthase subunit delta (178 aa).

This sequence belongs to the ATPase delta chain family. As to quaternary structure, F-type ATPases have 2 components, F(1) - the catalytic core - and F(0) - the membrane proton channel. F(1) has five subunits: alpha(3), beta(3), gamma(1), delta(1), epsilon(1). F(0) has three main subunits: a(1), b(2) and c(10-14). The alpha and beta chains form an alternating ring which encloses part of the gamma chain. F(1) is attached to F(0) by a central stalk formed by the gamma and epsilon chains, while a peripheral stalk is formed by the delta and b chains.

The protein resides in the cell membrane. Functionally, f(1)F(0) ATP synthase produces ATP from ADP in the presence of a proton or sodium gradient. F-type ATPases consist of two structural domains, F(1) containing the extramembraneous catalytic core and F(0) containing the membrane proton channel, linked together by a central stalk and a peripheral stalk. During catalysis, ATP synthesis in the catalytic domain of F(1) is coupled via a rotary mechanism of the central stalk subunits to proton translocation. Its function is as follows. This protein is part of the stalk that links CF(0) to CF(1). It either transmits conformational changes from CF(0) to CF(1) or is implicated in proton conduction. In Streptococcus equi subsp. zooepidemicus (strain H70), this protein is ATP synthase subunit delta.